Here is a 503-residue protein sequence, read N- to C-terminus: Maturase K (503 aa).

It belongs to the intron maturase 2 family. MatK subfamily.

Its subcellular location is the plastid. The protein resides in the chloroplast. In terms of biological role, usually encoded in the trnK tRNA gene intron. Probably assists in splicing its own and other chloroplast group II introns. This is Maturase K from Psilotum nudum (Whisk fern).